We begin with the raw amino-acid sequence, 156 residues long: Small ribosomal subunit protein uS7 (156 aa).

It belongs to the universal ribosomal protein uS7 family. In terms of assembly, part of the 30S ribosomal subunit. Contacts proteins S9 and S11.

Functionally, one of the primary rRNA binding proteins, it binds directly to 16S rRNA where it nucleates assembly of the head domain of the 30S subunit. Is located at the subunit interface close to the decoding center, probably blocks exit of the E-site tRNA. In Salmonella choleraesuis (strain SC-B67), this protein is Small ribosomal subunit protein uS7.